We begin with the raw amino-acid sequence, 135 residues long: Small ribosomal subunit protein uS8 (135 aa).

It belongs to the universal ribosomal protein uS8 family. As to quaternary structure, part of the 30S ribosomal subunit. Contacts proteins S5 and S12.

One of the primary rRNA binding proteins, it binds directly to 16S rRNA central domain where it helps coordinate assembly of the platform of the 30S subunit. In Corynebacterium urealyticum (strain ATCC 43042 / DSM 7109), this protein is Small ribosomal subunit protein uS8.